Consider the following 223-residue polypeptide: Alpha-S2-casein (223 aa).

An N-terminal signal peptide occupies residues 1-15; that stretch reads MKFFIFTCLLAVALA. A phosphoserine mark is found at serine 23, serine 24, serine 25, serine 72, serine 73, serine 74, serine 77, serine 145, serine 147, serine 151, and serine 159. Positions 77–141 form a repeat; it reads SAEVAPEEIK…AGPFTPTVNR (65 aa). Residues 159-223 constitute a repeat; the sequence is STEVFTKKTK…TNAIPYVRYL (65 aa).

Belongs to the alpha-casein family. In terms of tissue distribution, mammary gland specific. Secreted in milk.

It localises to the secreted. Important role in the capacity of milk to transport calcium phosphate. This chain is Alpha-S2-casein (CSN1S2), found in Capra hircus (Goat).